The sequence spans 373 residues: WAT1-related protein At4g08300 (373 aa).

10 helical membrane-spanning segments follow: residues 11–31, 41–61, 67–87, 102–122, 139–159, 185–205, 219–239, 255–275, 281–301, and 306–326; these read PIIA…ITMV, ILAT…ALIL, PKMT…EPLL, TYSS…AVIF, IGTA…GPAI, WVTG…FFIL, LVMW…LIMV, AAVY…SIVI, VFTT…GVLV, and IHLG…SVVW. 2 EamA domains span residues 23–151 and 198–325; these read AGMY…AMVM and TWAG…YSVV.

Belongs to the drug/metabolite transporter (DMT) superfamily. Plant drug/metabolite exporter (P-DME) (TC 2.A.7.4) family.

The protein localises to the membrane. This Arabidopsis thaliana (Mouse-ear cress) protein is WAT1-related protein At4g08300.